The primary structure comprises 1639 residues: Peroxide stress-activated histidine kinase mak1 (1639 aa).

Residues 38–49 (SFTNSQNSSVGS) show a composition bias toward polar residues. Positions 38–76 (SFTNSQNSSVGSVHSPILESPTSLNRQHRNSFSFNNVSS) are disordered. Residues 67 to 76 (NSFSFNNVSS) are compositionally biased toward low complexity. Residues 716–786 (PFPLLKVIID…NDWKSSLFSG (71 aa)) enclose the PAS 1 domain. Residues 789-841 (FYHEIRLQRFDNVYRYFICRAVPLRDCTGSVLHFFGTMTDVHDQKLAERELQK) form the PAC 1 domain. One can recognise a PAS 2 domain in the interval 848 to 920 (NENSYRSLAE…ESLEGTFNNQ (73 aa)). A PAC 2 domain is found at 929–982 (FAAEIRFRSTDGHYRWHLVKSVCVNNSADTSTNLWLGTCTDIHDHKMLEEKLQE). A Histidine kinase domain is found at 1000 to 1223 (NMSHEIRTPL…RFMWTATFTM (224 aa)). A Phosphohistidine; by autocatalysis modification is found at H1003. The Response regulatory domain maps to 1507–1629 (SVLLAEDNII…HLSLIISGIL (123 aa)). 4-aspartylphosphate is present on D1559.

It is found in the cytoplasm. The catalysed reaction is ATP + protein L-histidine = ADP + protein N-phospho-L-histidine.. Its function is as follows. Involved in the control of the SAPK-dependent transcriptional response to peroxide stress. Also has a role in G2/M regulation. In Schizosaccharomyces pombe (strain 972 / ATCC 24843) (Fission yeast), this protein is Peroxide stress-activated histidine kinase mak1 (mak1).